Here is a 468-residue protein sequence, read N- to C-terminus: ATP synthase subunit beta 1 (468 aa).

151 to 158 (GGAGVGKT) provides a ligand contact to ATP.

This sequence belongs to the ATPase alpha/beta chains family. In terms of assembly, F-type ATPases have 2 components, CF(1) - the catalytic core - and CF(0) - the membrane proton channel. CF(1) has five subunits: alpha(3), beta(3), gamma(1), delta(1), epsilon(1). CF(0) has three main subunits: a(1), b(2) and c(9-12). The alpha and beta chains form an alternating ring which encloses part of the gamma chain. CF(1) is attached to CF(0) by a central stalk formed by the gamma and epsilon chains, while a peripheral stalk is formed by the delta and b chains.

The protein resides in the cell inner membrane. It catalyses the reaction ATP + H2O + 4 H(+)(in) = ADP + phosphate + 5 H(+)(out). Produces ATP from ADP in the presence of a proton gradient across the membrane. The catalytic sites are hosted primarily by the beta subunits. The protein is ATP synthase subunit beta 1 of Photobacterium profundum (strain SS9).